We begin with the raw amino-acid sequence, 68 residues long: Large ribosomal subunit protein uL30 (68 aa).

It belongs to the universal ribosomal protein uL30 family. In terms of assembly, part of the 50S ribosomal subunit.

The chain is Large ribosomal subunit protein uL30 from Agrobacterium fabrum (strain C58 / ATCC 33970) (Agrobacterium tumefaciens (strain C58)).